We begin with the raw amino-acid sequence, 329 residues long: NADH-quinone oxidoreductase subunit H (329 aa).

The next 9 helical transmembrane spans lie at 9 to 29 (LIKILILVAVFSALGGFATYI), 42 to 62 (GPCYVGPFGLLQVAADGIKLF), 75 to 95 (FIFTLAPIIAMVSAFVSMAPI), 117 to 137 (IGFLFFLAVGAAGIYAPILAG), 154 to 174 (IQLLSFEVVSTLTILAPLMVV), 188 to 208 (GGFLDWLVFKQPLAFVLFLIA), 238 to 258 (LKWGMFFLAEYAHLFAFSFVI), 269 to 291 (WGFIPGGIAILIKAGFFVFLSMW), and 309 to 329 (WKIMLPLALLNIVLTGIIILI).

This sequence belongs to the complex I subunit 1 family. NDH-1 is composed of 14 different subunits. Subunits NuoA, H, J, K, L, M, N constitute the membrane sector of the complex.

The protein localises to the cell inner membrane. The catalysed reaction is a quinone + NADH + 5 H(+)(in) = a quinol + NAD(+) + 4 H(+)(out). Functionally, NDH-1 shuttles electrons from NADH, via FMN and iron-sulfur (Fe-S) centers, to quinones in the respiratory chain. The immediate electron acceptor for the enzyme in this species is believed to be ubiquinone. Couples the redox reaction to proton translocation (for every two electrons transferred, four hydrogen ions are translocated across the cytoplasmic membrane), and thus conserves the redox energy in a proton gradient. This subunit may bind ubiquinone. The chain is NADH-quinone oxidoreductase subunit H from Helicobacter pylori (strain HPAG1).